The following is a 1026-amino-acid chain: Retinoblastoma-related protein 1 (1026 aa).

The segment at 416–616 (TPVSTAMTTA…EKGSSMYNSL (201 aa)) is domain A. Residues 416-872 (TPVSTAMTTA…NEVFIPSVKP (457 aa)) are pocket. Residues 617–737 (AVARPALSVE…PGGGGETCAE (121 aa)) form a spacer region. The tract at residues 656–680 (PVPSLPKPEPMSAQNGDPRSPKRPC) is disordered. The segment at 738–872 (TGISVFFSKI…NEVFIPSVKP (135 aa)) is domain B. The interval 1007-1026 (QNGSSASSSGAPLKSEQPDS) is disordered.

Belongs to the retinoblastoma protein (RB) family.

It localises to the nucleus. Its function is as follows. Regulator of biological processes that recruits a histone deacetylase to control gene transcription. May play a role in the entry into mitosis, negatively regulating the cell proliferation. Formation of stable complexes with geminiviridae replication-associated proteins may create a cellular environment which favors viral DNA replication. In Pisum sativum (Garden pea), this protein is Retinoblastoma-related protein 1 (RBR1).